The chain runs to 497 residues: Maintenance of mitochondrial morphology protein 1 (497 aa).

Topologically, residues 1-28 are lumenal; it reads MSSVLNPSSPHSWDLCCSSSSNRSYHRP. The chain crosses the membrane as a helical span at residues 29-55; the sequence is THPIVGLLVGQLSVVLLIGAFIKFFIF. Topologically, residues 56–497 are cytoplasmic; that stretch reads GEAPPSPSRS…GSLPDAVPIT (442 aa). 4 disordered regions span residues 60-107, 284-330, 402-421, and 437-497; these read PSPS…SSST, ESST…STTG, TGVR…AAGV, and EMLH…VPIT. The span at 66 to 77 shows a compositional bias: basic residues; sequence QTHRTSQHKRSY. Positions 81–94 are enriched in basic and acidic residues; that stretch reads GARDLSPRTLKEKP. 3 stretches are compositionally biased toward polar residues: residues 95–107, 284–302, and 311–330; these read SSNV…SSST, ESST…NLRS, and PQES…STTG. Residues 140-393 form the SMP-LTD domain; it reads QPESLDWFNV…EPRVQVVALP (254 aa). Residues 412-421 show a composition bias toward low complexity; sequence DVSSSDAAGV. The segment covering 440-451 has biased composition (basic and acidic residues); sequence HAAREVDAEGLR. Positions 462–473 are enriched in polar residues; that stretch reads GSSSKYAQQNQS. Residues 474 to 484 are compositionally biased toward basic and acidic residues; that stretch reads SRERGRADDPF.

It belongs to the MMM1 family. As to quaternary structure, homodimer. Component of the ER-mitochondria encounter structure (ERMES) or MDM complex, composed of MMM1, MDM10, MDM12 and MDM34. An MMM1 homodimer associates with one molecule of MDM12 on each side in a pairwise head-to-tail manner, and the SMP-LTD domains of MMM1 and MDM12 generate a continuous hydrophobic tunnel for phospholipid trafficking.

The protein resides in the endoplasmic reticulum membrane. Functionally, component of the ERMES/MDM complex, which serves as a molecular tether to connect the endoplasmic reticulum (ER) and mitochondria. Components of this complex are involved in the control of mitochondrial shape and protein biogenesis, and function in nonvesicular lipid trafficking between the ER and mitochondria. The MDM12-MMM1 subcomplex functions in the major beta-barrel assembly pathway that is responsible for biogenesis of all outer membrane beta-barrel proteins, and acts in a late step after the SAM complex. The MDM10-MDM12-MMM1 subcomplex further acts in the TOM40-specific pathway after the action of the MDM12-MMM1 complex. Essential for establishing and maintaining the structure of mitochondria and maintenance of mtDNA nucleoids. The protein is Maintenance of mitochondrial morphology protein 1 of Uncinocarpus reesii (strain UAMH 1704).